The following is a 403-amino-acid chain: Acetate kinase (403 aa).

Position 9 (Asn-9) interacts with Mg(2+). Lys-16 contacts ATP. Arg-93 is a binding site for substrate. The Proton donor/acceptor role is filled by Asp-150. Residues 210–214, 284–286, and 332–336 contribute to the ATP site; these read HLGNG, DFR, and GVGEN. Residue Glu-388 participates in Mg(2+) binding.

Belongs to the acetokinase family. In terms of assembly, homodimer. Mg(2+) is required as a cofactor. Mn(2+) serves as cofactor.

It is found in the cytoplasm. It carries out the reaction acetate + ATP = acetyl phosphate + ADP. Its pathway is metabolic intermediate biosynthesis; acetyl-CoA biosynthesis; acetyl-CoA from acetate: step 1/2. Its function is as follows. Catalyzes the formation of acetyl phosphate from acetate and ATP. Can also catalyze the reverse reaction. In Corynebacterium jeikeium (strain K411), this protein is Acetate kinase.